Consider the following 540-residue polypeptide: MRRFLINQAKGLVDHSRRQHHHKSPSFLSPQPRPLASSPPALSRFFSSTSEMSASDSTSSLPVTLDSINPKVLKCEYAVRGEIVNIAQKLQEDLKTNKDAYPFDEIIYCNIGNPQSLGQLPIKFFREVLALCDHASLLDESETHGLFSTDSIDRAWRILDHIPGRATGAYSHSQGIKGLRDVIAAGIEARDGFPADPNDIFLTDGASPAVHMMMQLLLSSEKDGILSPIPQYPLYSASIALHGGSLVPYYLDEATGWGLEISDLKKQLEEARSKGISVRALVVINPGNPTGQVLAEENQRDIVNFCKQEGLVLLADEVYQENVYVPDKKFHSFKKVARSLGYGEKDISLVSFQSVSKGYYGECGKRGGYMEVTGFTSDVREQIYKMASVNLCSNISGQILASLVMSPPKPGDDSYDSYMAERDGILSSMAKRAKTLEDALNSLEGVTCNRAEGAMYLFPRINLPQKAIEAAEAEKTAPDAFYCKRLLNATGVVVVPGSGFGQVPGTWHFRCTILPQEDKIPAIVNRLTEFHKSFMDEFRN.

Residues 1-46 (MRRFLINQAKGLVDHSRRQHHHKSPSFLSPQPRPLASSPPALSRFF) constitute a mitochondrion transit peptide. The interval 11 to 40 (GLVDHSRRQHHHKSPSFLSPQPRPLASSPP) is disordered. The span at 28–40 (LSPQPRPLASSPP) shows a compositional bias: low complexity. Position 357 is an N6-(pyridoxal phosphate)lysine (Lys-357).

This sequence belongs to the class-I pyridoxal-phosphate-dependent aminotransferase family. Alanine aminotransferase subfamily. Homodimer. It depends on pyridoxal 5'-phosphate as a cofactor. In terms of processing, the N-terminus is blocked. In terms of tissue distribution, expressed in shoots, essentially in leaves and flowers, mostly in vascular tissues. Also detected in stems and roots.

It is found in the mitochondrion. It carries out the reaction L-alanine + 2-oxoglutarate = pyruvate + L-glutamate. It functions in the pathway photosynthesis; C4 acid pathway. Its pathway is amino-acid degradation; L-alanine degradation via transaminase pathway; pyruvate from L-alanine: step 1/1. The chain is Alanine aminotransferase 2, mitochondrial (ALAAT2) from Arabidopsis thaliana (Mouse-ear cress).